The primary structure comprises 160 residues: MEKVPMTANGYAALQVELKQRQTVDRPRIIEHIAEARSHGDLSENAEYHAAKEEQSHNEGRIADLEDKLARADVIDITKLSGDTIMFGATVTLVDEDTEKKAVWQIVGEPEADAKKGRISITSPLARALIGKKKGASVEVMAPGGAKAYEITKVEWREPS.

Positions 49–73 (HAAKEEQSHNEGRIADLEDKLARAD) form a coiled coil.

It belongs to the GreA/GreB family.

In terms of biological role, necessary for efficient RNA polymerase transcription elongation past template-encoded arresting sites. The arresting sites in DNA have the property of trapping a certain fraction of elongating RNA polymerases that pass through, resulting in locked ternary complexes. Cleavage of the nascent transcript by cleavage factors such as GreA or GreB allows the resumption of elongation from the new 3'terminus. GreA releases sequences of 2 to 3 nucleotides. The protein is Transcription elongation factor GreA of Rhodopseudomonas palustris (strain BisA53).